The chain runs to 174 residues: RNA pyrophosphohydrolase (174 aa).

A Nudix hydrolase domain is found at 6-149 (GYRPNVGIIL…KRDVYLGALK (144 aa)). The Nudix box signature appears at 38-59 (GGIKPGESPETAMYRELYEEVG).

Belongs to the Nudix hydrolase family. RppH subfamily. A divalent metal cation is required as a cofactor.

Functionally, accelerates the degradation of transcripts by removing pyrophosphate from the 5'-end of triphosphorylated RNA, leading to a more labile monophosphorylated state that can stimulate subsequent ribonuclease cleavage. This is RNA pyrophosphohydrolase from Neisseria meningitidis serogroup A / serotype 4A (strain DSM 15465 / Z2491).